We begin with the raw amino-acid sequence, 663 residues long: Endopolyphosphatase (663 aa).

The Cytoplasmic portion of the chain corresponds to 1 to 14 (MAVNEKDVGRKSRV). Residues 15 to 35 (SVVLWVFIALGTLFLCKNAFT) form a helical; Signal-anchor for type II membrane protein membrane-spanning segment. The Vacuolar segment spans residues 36 to 663 (FSSESIHGLK…ISTGYEDERN (628 aa)). Asn-487 and Asn-526 each carry an N-linked (GlcNAc...) asparagine glycan. The tract at residues 534–564 (SAEQNKKKKKKNGKPDKSIPRKKPDELPAGP) is disordered. The span at 546 to 559 (GKPDKSIPRKKPDE) shows a compositional bias: basic and acidic residues.

This sequence belongs to the endopolyphosphatase PPN1 family. It depends on a divalent metal cation as a cofactor. Post-translationally, processing by proteases in the vacuole may be required for activation.

Its subcellular location is the vacuole membrane. It catalyses the reaction [phosphate](n+1) + n H2O = (n+1) phosphate + n H(+). In terms of biological role, catalyzes the hydrolysis of inorganic polyphosphate (polyP) chains of many hundreds of phosphate residues into shorter lengths. This chain is Endopolyphosphatase (PPN1), found in Candida glabrata (strain ATCC 2001 / BCRC 20586 / JCM 3761 / NBRC 0622 / NRRL Y-65 / CBS 138) (Yeast).